Consider the following 59-residue polypeptide: Preprotein translocase subunit SecG (59 aa).

The Cytoplasmic portion of the chain corresponds to 1 to 35 (MPSSKKKKEDVPIASMAGLVRYYESEKEKVKISPK). Residues 36 to 56 (VVVVASIVLIAGVIIASFIIP) form a helical membrane-spanning segment. Residues 57-59 (PPL) are Extracellular-facing.

It belongs to the SEC61-beta family. Component of the protein translocase complex. Heterotrimer consisting of alpha (SecY), beta (SecG) and gamma (SecE) subunits. Can form oligomers of the heterotrimer.

The protein resides in the cell membrane. In terms of biological role, involved in protein export. The function of the beta subunit is unknown, but it may be involved in stabilization of the trimeric complex. This is Preprotein translocase subunit SecG from Sulfolobus acidocaldarius (strain ATCC 33909 / DSM 639 / JCM 8929 / NBRC 15157 / NCIMB 11770).